The primary structure comprises 493 residues: UDP-N-acetylmuramoyl-L-alanyl-D-glutamate--2,6-diaminopimelate ligase (493 aa).

UDP-N-acetyl-alpha-D-muramoyl-L-alanyl-D-glutamate is bound at residue Ser-30. 114 to 120 lines the ATP pocket; it reads GTNGKTS. UDP-N-acetyl-alpha-D-muramoyl-L-alanyl-D-glutamate-binding positions include 156–157, Ser-183, Gln-189, and Arg-191; that span reads TT. Lys-223 carries the post-translational modification N6-carboxylysine. Residues Arg-386, 410 to 413, Gly-460, and Glu-464 contribute to the meso-2,6-diaminopimelate site; that span reads DNPR. The Meso-diaminopimelate recognition motif motif lies at 410–413; it reads DNPR.

The protein belongs to the MurCDEF family. MurE subfamily. Requires Mg(2+) as cofactor. Post-translationally, carboxylation is probably crucial for Mg(2+) binding and, consequently, for the gamma-phosphate positioning of ATP.

Its subcellular location is the cytoplasm. It carries out the reaction UDP-N-acetyl-alpha-D-muramoyl-L-alanyl-D-glutamate + meso-2,6-diaminopimelate + ATP = UDP-N-acetyl-alpha-D-muramoyl-L-alanyl-gamma-D-glutamyl-meso-2,6-diaminopimelate + ADP + phosphate + H(+). It functions in the pathway cell wall biogenesis; peptidoglycan biosynthesis. Catalyzes the addition of meso-diaminopimelic acid to the nucleotide precursor UDP-N-acetylmuramoyl-L-alanyl-D-glutamate (UMAG) in the biosynthesis of bacterial cell-wall peptidoglycan. This is UDP-N-acetylmuramoyl-L-alanyl-D-glutamate--2,6-diaminopimelate ligase from Chromobacterium violaceum (strain ATCC 12472 / DSM 30191 / JCM 1249 / CCUG 213 / NBRC 12614 / NCIMB 9131 / NCTC 9757 / MK).